A 74-amino-acid chain; its full sequence is Putative protein YozX (74 aa).

This is Putative protein YozX (yozX) from Bacillus subtilis (strain 168).